Here is a 390-residue protein sequence, read N- to C-terminus: S-adenosylmethionine synthase (390 aa).

E12 contacts Mg(2+). H18 contacts ATP. Residue E46 participates in K(+) binding. The L-methionine site is built by E59 and Q102. ATP contacts are provided by residues 170–172, 238–241, D249, 255–256, A272, K276, and K280; these read DGK, SGRF, and RK. D249 contributes to the L-methionine binding site. K280 lines the L-methionine pocket.

Belongs to the AdoMet synthase family. In terms of assembly, homotetramer. Mn(2+) is required as a cofactor. Requires Mg(2+) as cofactor. Co(2+) serves as cofactor. It depends on K(+) as a cofactor.

The protein resides in the cytoplasm. It catalyses the reaction L-methionine + ATP + H2O = S-adenosyl-L-methionine + phosphate + diphosphate. The protein operates within amino-acid biosynthesis; S-adenosyl-L-methionine biosynthesis; S-adenosyl-L-methionine from L-methionine: step 1/1. In terms of biological role, catalyzes the formation of S-adenosylmethionine from methionine and ATP. The reaction comprises two steps that are both catalyzed by the same enzyme: formation of S-adenosylmethionine (AdoMet) and triphosphate, and subsequent hydrolysis of the triphosphate. The protein is S-adenosylmethionine synthase (METM) of Chlamydomonas reinhardtii (Chlamydomonas smithii).